We begin with the raw amino-acid sequence, 477 residues long: Inner membrane transporter YgjI (477 aa).

The Periplasmic segment spans residues 1–8 (MSDTKRNT). A helical membrane pass occupies residues 9-29 (IGKFGLLSLTFAAVYSFNNVI). Over 30 to 41 (NNNIELGLASAP) the chain is Cytoplasmic. Residues 42-62 (MFFLATIFYFIPFCLIIAEFV) traverse the membrane as a helical segment. The Periplasmic portion of the chain corresponds to 63–83 (SLNKNSEAGVYAWVKSSLGGR). The helical transmembrane segment at 84 to 104 (WAFITAYTYWFVNLFFFTSLL) threads the bilayer. Residues 105–120 (PRVIAYASYAFLGYEY) are Cytoplasmic-facing. The helical transmembrane segment at 121–141 (IMTPVATTIISMVLFAFSTWV) threads the bilayer. Residues 142–158 (STNGAKMLGPITSVTST) lie on the Periplasmic side of the membrane. The helical transmembrane segment at 159 to 179 (LMLLLTLSYILLAGTALVGGV) threads the bilayer. Topologically, residues 180–196 (QPADAITVDAMIPNFNW) are cytoplasmic. Residues 197–217 (AFLGVTTWIFMAAGGAESVAV) form a helical membrane-spanning segment. Residues 218-232 (YVNDVKGGSKSFVKV) are Periplasmic-facing. A helical membrane pass occupies residues 233–253 (IILAGIFIGVLYSVSSVLINV). The Cytoplasmic portion of the chain corresponds to 254–263 (FVSSKELKFT). A helical membrane pass occupies residues 264–284 (GGSVQVFHGMAAYFGLPEALM). Topologically, residues 285 to 286 (NR) are periplasmic. A helical transmembrane segment spans residues 287–307 (FVGLVSFTAMFGSLLMWTATP). The Cytoplasmic segment spans residues 308–335 (VKIFFSEIPEGIFGKKTVELNENGVPAR). A helical transmembrane segment spans residues 336 to 356 (AAWIQFLIVIPLMIIPMLGSN). Over 357–364 (TVQDLMNT) the chain is Periplasmic. The chain crosses the membrane as a helical span at residues 365-385 (IINMTAAASMLPPLFIMLAYL). Over 386-405 (NLRAKLDHLPRDFRMGSRRT) the chain is Cytoplasmic. Residues 406–426 (GIIVVSMLIAIFAVGFVASTF) traverse the membrane as a helical segment. Residues 427–431 (PTGAN) lie on the Periplasmic side of the membrane. A helical membrane pass occupies residues 432–452 (ILTIIFYNVGGIVIFLGFAWW). Residues 453 to 477 (KYSKYIKGLTAEERHIEATPASNVD) are Cytoplasmic-facing.

It belongs to the amino acid-polyamine-organocation (APC) superfamily.

The protein localises to the cell inner membrane. The polypeptide is Inner membrane transporter YgjI (ygjI) (Escherichia coli (strain K12)).